Reading from the N-terminus, the 87-residue chain is Polyketide-8 synthase acyl carrier protein 2 (87 aa).

The Carrier domain maps to 8 to 83; that stretch reads ALDKEQLREL…GTYELLTSKL (76 aa). Ser-43 is subject to O-(pantetheine 4'-phosphoryl)serine.

4'-phosphopantetheine is transferred from CoA to a specific serine of the apo-ACP-like protein.

Its function is as follows. Acyl carrier protein. The protein is Polyketide-8 synthase acyl carrier protein 2 of Streptomyces avermitilis (strain ATCC 31267 / DSM 46492 / JCM 5070 / NBRC 14893 / NCIMB 12804 / NRRL 8165 / MA-4680).